A 391-amino-acid chain; its full sequence is 2,4,6-trihydroxybenzophenone synthase (391 aa).

Residue Cys165 is part of the active site.

Belongs to the thiolase-like superfamily. Chalcone/stilbene synthases family. Homodimer. Expressed in young fruit pericarp.

It catalyses the reaction benzoyl-CoA + 3 malonyl-CoA + 2 H(+) = 2,4,6-trihydroxybenzophenone + 3 CO2 + 4 CoA. Type III polyketide synthase involved in the biosynthesis of benzophenones and xanthones. Produces mainly 2,4,6-trihydroxybenzophenone together with minor amounts of tetraketide lactone, triketide lactone and diketide lactone. The preferred substrate is benzoyl-CoA, but can also use acetyl-CoA, phenylacetyl-CoA, hexanoyl-CoA, cinnamoyl-CoA, p-coumaroyl-CoA and salicoyl-CoA. This is 2,4,6-trihydroxybenzophenone synthase (BPS) from Garcinia mangostana (Mangosteen).